Reading from the N-terminus, the 155-residue chain is Microsomal glutathione S-transferase 1 (155 aa).

Topologically, residues 3–9 (DLTELMK) are lumenal. The chain crosses the membrane as a helical span at residues 10 to 33 (NEVFMAFASYATIVLSKMMFMSTA). Residues 34 to 62 (TAFYRLTRKVFANPEDCSSFGKGENAKKY) lie on the Cytoplasmic side of the membrane. Arg-38 lines the glutathione pocket. Lys-42, Lys-55, and Lys-60 each carry N6-acetyllysine. Residues 63 to 96 (LRTDERVERVRRAHLNDLENIVPFLGIGLLYSLS) traverse the membrane as a helical segment. Residues Arg-73, Arg-74, His-76, and Glu-81 each contribute to the glutathione site. Residues 97–99 (GPD) are Lumenal-facing. A helical transmembrane segment spans residues 100 to 123 (LSTAILHFRLFVGARIYHTIAYLT). Tyr-121 is a glutathione binding site. At 124–128 (PLPQP) the chain is on the cytoplasmic side. Residues 129–148 (NRGLAFFLGYGVTLSMAYRL) traverse the membrane as a helical segment. Topologically, residues 149–155 (LKSRLYL) are lumenal.

The protein belongs to the MAPEG family. Homotrimer; The trimer binds only one molecule of glutathione.

It localises to the endoplasmic reticulum membrane. Its subcellular location is the mitochondrion outer membrane. The enzyme catalyses RX + glutathione = an S-substituted glutathione + a halide anion + H(+). Conjugation of reduced glutathione to a wide number of exogenous and endogenous hydrophobic electrophiles. The polypeptide is Microsomal glutathione S-transferase 1 (MGST1) (Sus scrofa (Pig)).